The following is a 150-amino-acid chain: Flagellar assembly factor FliW (150 aa).

It belongs to the FliW family. As to quaternary structure, interacts with translational regulator CsrA and flagellin(s).

It is found in the cytoplasm. Acts as an anti-CsrA protein, binds CsrA and prevents it from repressing translation of its target genes, one of which is flagellin. Binds to flagellin and participates in the assembly of the flagellum. The sequence is that of Flagellar assembly factor FliW from Caldanaerobacter subterraneus subsp. tengcongensis (strain DSM 15242 / JCM 11007 / NBRC 100824 / MB4) (Thermoanaerobacter tengcongensis).